Reading from the N-terminus, the 122-residue chain is Large ribosomal subunit protein bL12 (122 aa).

The protein belongs to the bacterial ribosomal protein bL12 family. As to quaternary structure, homodimer. Part of the ribosomal stalk of the 50S ribosomal subunit. Forms a multimeric L10(L12)X complex, where L10 forms an elongated spine to which 2 to 4 L12 dimers bind in a sequential fashion. Binds GTP-bound translation factors.

Forms part of the ribosomal stalk which helps the ribosome interact with GTP-bound translation factors. Is thus essential for accurate translation. This Xylella fastidiosa (strain M12) protein is Large ribosomal subunit protein bL12.